A 290-amino-acid chain; its full sequence is Energy-coupling factor transporter ATP-binding protein EcfA2 (290 aa).

An ABC transporter domain is found at Glu6–Ser246. Position 40–47 (Gly40–Ser47) interacts with ATP.

The protein belongs to the ABC transporter superfamily. Energy-coupling factor EcfA family. In terms of assembly, forms a stable energy-coupling factor (ECF) transporter complex composed of 2 membrane-embedded substrate-binding proteins (S component), 2 ATP-binding proteins (A component) and 2 transmembrane proteins (T component).

The protein resides in the cell membrane. In terms of biological role, ATP-binding (A) component of a common energy-coupling factor (ECF) ABC-transporter complex. Unlike classic ABC transporters this ECF transporter provides the energy necessary to transport a number of different substrates. This is Energy-coupling factor transporter ATP-binding protein EcfA2 from Geobacillus kaustophilus (strain HTA426).